The sequence spans 322 residues: Extracellular metalloprotease AFUB_008060 (322 aa).

The N-terminal stretch at 1–22 (MLPFNSCVYVLLIISLMSNCRA) is a signal peptide. Residues Asn123 and Asn197 are each glycosylated (N-linked (GlcNAc...) asparagine). Position 233 (His233) interacts with Zn(2+). Glu234 is a catalytic residue. His237 provides a ligand contact to Zn(2+). Cysteines 272 and 299 form a disulfide.

This sequence belongs to the peptidase M43B family.

It is found in the secreted. Secreted metalloproteinase that allows assimilation of proteinaceous substrates. Plays a pivotal role as a pathogenicity determinant during infections and contributes to the ability of the pathogen to persist within the mammalian host. The protein is Extracellular metalloprotease AFUB_008060 of Aspergillus fumigatus (strain CBS 144.89 / FGSC A1163 / CEA10) (Neosartorya fumigata).